The following is a 403-amino-acid chain: Acetate kinase (403 aa).

Asparagine 13 is a Mg(2+) binding site. Residue lysine 20 participates in ATP binding. Arginine 94 provides a ligand contact to substrate. Aspartate 153 (proton donor/acceptor) is an active-site residue. ATP-binding positions include 213 to 217 (HLGNG), 288 to 290 (DFR), and 336 to 340 (GIGEN). Glutamate 390 provides a ligand contact to Mg(2+).

The protein belongs to the acetokinase family. As to quaternary structure, homodimer. Mg(2+) serves as cofactor. The cofactor is Mn(2+).

It localises to the cytoplasm. It catalyses the reaction acetate + ATP = acetyl phosphate + ADP. The protein operates within metabolic intermediate biosynthesis; acetyl-CoA biosynthesis; acetyl-CoA from acetate: step 1/2. Functionally, catalyzes the formation of acetyl phosphate from acetate and ATP. Can also catalyze the reverse reaction. In Buchnera aphidicola subsp. Schizaphis graminum (strain Sg), this protein is Acetate kinase.